Consider the following 783-residue polypeptide: MDAEAGVGGADQLPWRQHYRNLLLLAYQSFGVVYGDLSTSPLYVYKSTFSGRLRRYQDEQTVFGVLSLIFWTFTLIPLLKYVTIVLSADDNGEGGPFALYSLLCRHAKLSFLPNQQSADEELSTYYRNGFTSRHGSLPWLRRFMEKHKNARTVLLLIVLCGASMMIGDGILTPAISVLSSMSGLKVRATGLHDRSVVLLSCIVLVGLFALQHRGTQKVAFMFAPIVVIWLFCIGGIGLYNIIHWNPRIYQALSPYYIVKFFRTTGKDGWIALGGILLSMTGCEAMFADLGHFTSASVRLAFITIIYPCLILQYMGQAAFLSKNILDMPTGFYDSIPGPIFWPVFVVATLAAVVGSQAVISATFSIVKQCHSLGCFPRVKVVHTSRWIYGQIYIPEINWILMVLCVAVTVAFRDITLIGNAYGVACMTVMFVTTFLMALIMIFVWQKNIIFALSFFLLFGSVEVVYLSSSLMKVTQGGWVPLVLALIFMSVMYIWHYGTRKKYQYDLQNKVSMRYILSLGPSLDVVRVPGIGLIYTELVTGVPNIFTHFTTNLPAFHEVLVFLCVKSVPVPYVSPDERYLVGRIGPRAYRMYRCIVRYGYKDVQRDDDNFENMLVMNIGKFIMMEAEDASSSASYDTANEGRMAVITTSDDYDSPLAVRDSNDLADSMTMRSTKSESLRSLQSSYEQESPNVSRRRRVRFELPEEDDMDQQVKDELLALVEAKHTGVTYVMGHVYIKARKNSSFFKRFAIDVGYSFLRKNCRGPSVTLHIPHISLIEVGMAYQV.

The Cytoplasmic segment spans residues 1 to 21 (MDAEAGVGGADQLPWRQHYRN). The chain crosses the membrane as a helical span at residues 22 to 42 (LLLLAYQSFGVVYGDLSTSPL). Over 43–61 (YVYKSTFSGRLRRYQDEQT) the chain is Extracellular. A helical transmembrane segment spans residues 62-82 (VFGVLSLIFWTFTLIPLLKYV). Over 83–152 (TIVLSADDNG…FMEKHKNART (70 aa)) the chain is Cytoplasmic. A helical transmembrane segment spans residues 153–173 (VLLLIVLCGASMMIGDGILTP). Topologically, residues 174–189 (AISVLSSMSGLKVRAT) are extracellular. The helical transmembrane segment at 190–210 (GLHDRSVVLLSCIVLVGLFAL) threads the bilayer. At 211–217 (QHRGTQK) the chain is on the cytoplasmic side. A helical transmembrane segment spans residues 218 to 238 (VAFMFAPIVVIWLFCIGGIGL). Topologically, residues 239-268 (YNIIHWNPRIYQALSPYYIVKFFRTTGKDG) are extracellular. Residues 269–289 (WIALGGILLSMTGCEAMFADL) traverse the membrane as a helical segment. Topologically, residues 290–298 (GHFTSASVR) are cytoplasmic. The chain crosses the membrane as a helical span at residues 299 to 319 (LAFITIIYPCLILQYMGQAAF). The Extracellular segment spans residues 320-338 (LSKNILDMPTGFYDSIPGP). A helical membrane pass occupies residues 339–359 (IFWPVFVVATLAAVVGSQAVI). The Cytoplasmic segment spans residues 360-390 (SATFSIVKQCHSLGCFPRVKVVHTSRWIYGQ). Residues 391 to 411 (IYIPEINWILMVLCVAVTVAF) traverse the membrane as a helical segment. The Extracellular segment spans residues 412–422 (RDITLIGNAYG). A helical transmembrane segment spans residues 423-443 (VACMTVMFVTTFLMALIMIFV). Residues 444–447 (WQKN) are Cytoplasmic-facing. The helical transmembrane segment at 448–468 (IIFALSFFLLFGSVEVVYLSS) threads the bilayer. Over 469 to 475 (SLMKVTQ) the chain is Extracellular. The chain crosses the membrane as a helical span at residues 476-496 (GGWVPLVLALIFMSVMYIWHY). Residues 497–783 (GTRKKYQYDL…LIEVGMAYQV (287 aa)) are Cytoplasmic-facing. The segment at 662-691 (DLADSMTMRSTKSESLRSLQSSYEQESPNV) is disordered. Positions 677-691 (LRSLQSSYEQESPNV) are enriched in polar residues.

Belongs to the HAK/KUP transporter (TC 2.A.72.3) family.

The protein localises to the cell membrane. It carries out the reaction K(+)(in) = K(+)(out). The catalysed reaction is Na(+)(in) = Na(+)(out). In terms of biological role, high-affinity potassium transporter. Can transport sodium under high sodium and low potassium concentrations in the extracellular environment. This Oryza sativa subsp. japonica (Rice) protein is Probable potassium transporter 2 (HAK2).